The sequence spans 335 residues: Large ribosomal subunit protein uL10 (335 aa).

A disordered region spans residues 306–335 (VEETVEEEEEEEEEEDAEEEAAAGLGALFG). The segment covering 308–326 (ETVEEEEEEEEEEDAEEEA) has biased composition (acidic residues).

It belongs to the universal ribosomal protein uL10 family. In terms of assembly, part of the 50S ribosomal subunit. Forms part of the ribosomal stalk which helps the ribosome interact with GTP-bound translation factors. Forms a heptameric L10(L12)2(L12)2(L12)2 complex, where L10 forms an elongated spine to which the L12 dimers bind in a sequential fashion.

Functionally, forms part of the ribosomal stalk, playing a central role in the interaction of the ribosome with GTP-bound translation factors. The protein is Large ribosomal subunit protein uL10 of Methanobrevibacter smithii (strain ATCC 35061 / DSM 861 / OCM 144 / PS).